The sequence spans 312 residues: Tyrosine recombinase XerC (312 aa).

Positions 1–103 constitute a Core-binding (CB) domain; sequence MISAFYAFLD…AIKSFSQYCI (103 aa). Positions 124 to 306 constitute a Tyr recombinase domain; sequence ELPSPITYEQ…SMKLKKQTHE (183 aa). Active-site residues include R164, K188, H258, R261, and H284. The O-(3'-phospho-DNA)-tyrosine intermediate role is filled by Y293.

This sequence belongs to the 'phage' integrase family. XerC subfamily. Forms a cyclic heterotetrameric complex composed of two molecules of XerC and two molecules of XerD.

The protein resides in the cytoplasm. Site-specific tyrosine recombinase, which acts by catalyzing the cutting and rejoining of the recombining DNA molecules. The XerC-XerD complex is essential to convert dimers of the bacterial chromosome into monomers to permit their segregation at cell division. It also contributes to the segregational stability of plasmids. This Chlamydia caviae (strain ATCC VR-813 / DSM 19441 / 03DC25 / GPIC) (Chlamydophila caviae) protein is Tyrosine recombinase XerC.